We begin with the raw amino-acid sequence, 339 residues long: Ferrochelatase (339 aa).

Residues His-209 and Glu-290 each contribute to the Fe cation site.

This sequence belongs to the ferrochelatase family.

It localises to the cytoplasm. It catalyses the reaction heme b + 2 H(+) = protoporphyrin IX + Fe(2+). The protein operates within porphyrin-containing compound metabolism; protoheme biosynthesis; protoheme from protoporphyrin-IX: step 1/1. Catalyzes the ferrous insertion into protoporphyrin IX. This Rhizobium meliloti (strain 1021) (Ensifer meliloti) protein is Ferrochelatase.